The chain runs to 326 residues: ATP-dependent 6-phosphofructokinase (326 aa).

Gly-12 contributes to the ATP binding site. Arg-22–Lys-26 contributes to the ADP binding site. ATP is bound by residues Arg-73–Phe-74 and Gly-103–Ser-106. Mg(2+) is bound at residue Asp-104. Residue Thr-126–Asp-128 coordinates substrate. Catalysis depends on Asp-128, which acts as the Proton acceptor. Arg-155 is an ADP binding site. Residues Arg-163 and Met-170–His-172 contribute to the substrate site. ADP contacts are provided by residues Gly-186–Glu-188, Lys-212, and Lys-215–Ser-217. Substrate-binding positions include Glu-224, Lys-246, and His-252–Arg-255.

It belongs to the phosphofructokinase type A (PFKA) family. ATP-dependent PFK group I subfamily. Prokaryotic clade 'B1' sub-subfamily. Homotetramer. Mg(2+) is required as a cofactor.

Its subcellular location is the cytoplasm. It catalyses the reaction beta-D-fructose 6-phosphate + ATP = beta-D-fructose 1,6-bisphosphate + ADP + H(+). Its pathway is carbohydrate degradation; glycolysis; D-glyceraldehyde 3-phosphate and glycerone phosphate from D-glucose: step 3/4. Allosterically activated by ADP and other diphosphonucleosides, and allosterically inhibited by phosphoenolpyruvate. Its function is as follows. Catalyzes the phosphorylation of D-fructose 6-phosphate to fructose 1,6-bisphosphate by ATP, the first committing step of glycolysis. The chain is ATP-dependent 6-phosphofructokinase from Mycoplasmopsis pulmonis (strain UAB CTIP) (Mycoplasma pulmonis).